A 511-amino-acid polypeptide reads, in one-letter code: Probable DNA ligase (511 aa).

Glu-209 is an ATP binding site. Lys-211 functions as the N6-AMP-lysine intermediate in the catalytic mechanism. ATP contacts are provided by Arg-216, Arg-231, Glu-260, Phe-299, Arg-371, and Lys-377.

It belongs to the ATP-dependent DNA ligase family. Mg(2+) is required as a cofactor.

It carries out the reaction ATP + (deoxyribonucleotide)n-3'-hydroxyl + 5'-phospho-(deoxyribonucleotide)m = (deoxyribonucleotide)n+m + AMP + diphosphate.. Its function is as follows. DNA ligase that seals nicks in double-stranded DNA during DNA replication, DNA recombination and DNA repair. This is Probable DNA ligase from Mycolicibacterium gilvum (strain PYR-GCK) (Mycobacterium gilvum (strain PYR-GCK)).